The primary structure comprises 92 residues: MAYLHHTLLVCMGLLAMANAEAPQEQDPFTYDYQSLRIGGLIIAGILFILGILIILKRGAWERFDTARRTGEPDEEEGTFRSSIRRLSTRRR.

Residues 1–20 form the signal peptide; that stretch reads MAYLHHTLLVCMGLLAMANA. The Extracellular portion of the chain corresponds to 22–35; it reads APQEQDPFTYDYQS. A helical transmembrane segment spans residues 36-56; that stretch reads LRIGGLIIAGILFILGILIIL. At 57–92 the chain is on the cytoplasmic side; sequence KRGAWERFDTARRTGEPDEEEGTFRSSIRRLSTRRR. A disordered region spans residues 67–92; sequence ARRTGEPDEEEGTFRSSIRRLSTRRR. Thr79 carries the post-translational modification Phosphothreonine. The residue at position 82 (Ser82) is a Phosphoserine. A Phosphoserine; by PKA and PKC modification is found at Ser83. A compositionally biased stretch (basic residues) spans 83–92; the sequence is SIRRLSTRRR. Position 88 is a phosphoserine; by PKA (Ser88). A Phosphothreonine; by PKC modification is found at Thr89.

It belongs to the FXYD family. In terms of assembly, homotetramer. Monomer. Regulatory subunit of the sodium/potassium-transporting ATPase (NKA) which is composed of a catalytic alpha subunit, a non-catalytic beta subunit and an additional regulatory subunit. The monomeric form associates with NKA while the oligomeric form does not. Interacts with the catalytic alpha-1 subunit ATP1A1. Also interacts with the catalytic alpha-2 and alpha-3 subunits ATP1A2 and ATP1A3. Very little interaction with ATP1A1, ATP1A2 or ATP1A3 when phosphorylated at Ser-83. Interacts with the non-catalytic beta-1 subunit ATP1B1. Oxidative stress decreases interaction with ATP1A1 but increases interaction with ATP1B1. Major plasma membrane substrate for cAMP-dependent protein kinase (PKA) and protein kinase C (PKC) in several different tissues. Phosphorylated in response to insulin and adrenergic stimulation. Phosphorylation at Ser-88 stimulates sodium/potassium-transporting ATPase activity while the unphosphorylated form inhibits sodium/potassium-transporting ATPase activity. Phosphorylation increases tetramerization, decreases binding to ATP1A1 and reduces inhibition of ATP1A1 activity. Phosphorylation at Ser-83 leads to greatly reduced interaction with ATP1A1, ATP1A2 and ATP1A3. May be phosphorylated by DMPK. In terms of processing, palmitoylation increases half-life and stability and is enhanced upon phosphorylation at Ser-88 by PKA. Post-translationally, glutathionylated. In terms of tissue distribution, expressed in ventricular myocytes (at protein level).

The protein localises to the cell membrane. It is found in the sarcolemma. Its subcellular location is the apical cell membrane. The protein resides in the membrane. It localises to the caveola. The protein localises to the T-tubule. Associates with and regulates the activity of the sodium/potassium-transporting ATPase (NKA) which transports Na(+) out of the cell and K(+) into the cell. Inhibits NKA activity in its unphosphorylated state and stimulates activity when phosphorylated. Reduces glutathionylation of the NKA beta-1 subunit ATP1B1, thus reversing glutathionylation-mediated inhibition of ATP1B1. Contributes to female sexual development by maintaining the excitability of neurons which secrete gonadotropin-releasing hormone. This chain is Phospholemman, found in Oryctolagus cuniculus (Rabbit).